We begin with the raw amino-acid sequence, 175 residues long: Protein FanH (175 aa).

The signal sequence occupies residues Met1 to Ala20. Cys39 and Cys77 are disulfide-bonded.

It localises to the fimbrium. Involved in the biosynthesis of K99 fimbriae. The polypeptide is Protein FanH (fanH) (Escherichia coli).